The primary structure comprises 118 residues: uncharacterized protein (118 aa).

This is an uncharacterized protein from Escherichia coli (strain K12).